Consider the following 410-residue polypeptide: F-box protein At3g61340 (410 aa).

The region spanning Glu-17–Ile-66 is the F-box domain.

The sequence is that of F-box protein At3g61340 from Arabidopsis thaliana (Mouse-ear cress).